The primary structure comprises 106 residues: Large ribosomal subunit protein bL21 (106 aa).

The protein belongs to the bacterial ribosomal protein bL21 family. In terms of assembly, part of the 50S ribosomal subunit. Contacts protein L20.

This protein binds to 23S rRNA in the presence of protein L20. The sequence is that of Large ribosomal subunit protein bL21 from Coprothermobacter proteolyticus (strain ATCC 35245 / DSM 5265 / OCM 4 / BT).